The sequence spans 178 residues: Disulfide bond formation protein B (178 aa).

The Cytoplasmic segment spans residues 1-14 (MLSFFKTLSTKRSA). Residues 15–31 (WFLLFSSALLLEAIALY) traverse the membrane as a helical segment. The Periplasmic segment spans residues 32 to 49 (FQHGMGLAPCVMCIYERV). A disulfide bridge connects residues cysteine 41 and cysteine 44. A helical transmembrane segment spans residues 50–65 (AILGIAFSGLLGLLYP). Residues 66 to 72 (SSMLLRL) are Cytoplasmic-facing. The helical transmembrane segment at 73 to 90 (VALLIGLSSAIKGLMISI) threads the bilayer. The Periplasmic segment spans residues 91–145 (THLDLQLYPAPWKQCSAVAEFPETLPLDQWFPALFLPSGSCSEVTWQFLGFSMVQ). Cysteines 105 and 131 form a disulfide. The chain crosses the membrane as a helical span at residues 146–164 (WIVVIFALYTLLLALIFIS). Over 165–177 (QVKRLKPKQRRLF) the chain is Cytoplasmic.

The protein belongs to the DsbB family.

The protein localises to the cell inner membrane. Functionally, required for disulfide bond formation in some periplasmic proteins. Acts by oxidizing the DsbA protein. In Pasteurella multocida (strain Pm70), this protein is Disulfide bond formation protein B.